The chain runs to 732 residues: Segment polarity protein dishevelled homolog DVL-2 (732 aa).

Residues 1–82 (MAETKVIYHL…RVVSWLVSSE (82 aa)) enclose the DIX domain. Disordered stretches follow at residues 81–181 (SETS…SSST) and 195–237 (EEDD…SSFS). The segment covering 98–111 (DPPPVPPPVPPPPA) has biased composition (pro residues). The span at 146-157 (MRRDRVRRRDST) shows a compositional bias: basic and acidic residues. Residues 202 to 213 (RFSSSTEQSSAS) are compositionally biased toward polar residues. Residues 215 to 227 (LLKRHRRRRKQRP) are compositionally biased toward basic residues. Residues 250–335 (TVTLNMEKYN…KPGPIILTVA (86 aa)) enclose the PDZ domain. One can recognise a DEP domain in the interval 424–498 (PESGLEVRDR…SEQCYYIFGD (75 aa)). 3 stretches are compositionally biased toward low complexity: residues 570–589 (MGSA…SNRS), 612–629 (KSGS…SIRR), and 637–647 (PPSERSTSSRP). Positions 570-660 (MGSAGSQHSE…HPPSVHSYAA (91 aa)) are disordered.

This sequence belongs to the DSH family. Can form homomultimers. Interacts with prickle1. Interacts (via the PDZ domain) with ccdc88c/dal and dact1-B/dpr. Interacts (via the DIX domain) with ARP/Axin-related protein and dact1-A/frodo. Interacts with sdc4, possibly via fz7. Interacts directly (via the DEP domain) with efnb1/ephrin-B1. May interact indirectly with the phosphorylated ephrin receptors ephb1 and ephb2 via SH domain-containing adapters. In terms of processing, phosphorylated. Phosphorylation is controlled by frizzled proteins, correlates with the onset of embryo dorsalizing events and is higher in the dorsal half of early cleavage embryos. Phosphorylated on tyrosine residues in response to association with efnb1/ephrin-B1.

Its subcellular location is the cytoplasm. It is found in the cytoplasmic vesicle. It localises to the cell projection. The protein localises to the cilium. The protein resides in the nucleus. Its subcellular location is the cell membrane. Its function is as follows. Involved in at least 2 independent signaling cascades, controlling cell fate via canonical Wnt signaling and cell polarity via a planar cell polarity (PCP) cascade. Acts synergistically with dal/dapple-like to activate Wnt signaling, stabilizing ctnnb1/beta-catenin and leading to dorsal axis formation. Also prevents degradation of ctnnb1/beta-catenin by displacing gsk3 from a complex with ARP/Axin-related protein. Has an additional role in anterior-posterior (A/P) axis formation, specifying different neuroectodermal cell fates along the A/P axis in a dose-dependent manner by activating several early patterning genes. In the PCP pathway, required at the cell membrane for PCP-mediated neural and mesodermal convergent extension during gastrulation and subsequent neural tube closure, acting to activate jnk. Also involved in blastopore closure and archenteron elongation during early, but not late, gastrulation. Associates with ephrin receptors and ligands and acts as part of a downstream PCP pathway to mediate ephrin-mediated cell repulsion via activation of rhoa. Required for efnb1/ephrin-B1-driven movement of non-retinal progenitor cells into the retina during eye field formation. Patterns the hindbrain. Required for ciliogenesis. Controls the docking of basal bodies to the apical plasma membrane; mediates the activation, but not localization of rhoa at the apical surface of ciliated cells during basal body docking. Furthermore, required for the association of basal bodies with membrane-bound vesicles and the vesicle-trafficking protein exoc4/sec8, and this association is in turn required for basal body docking. Once basal bodies are docked, required for the planar polarization of basal bodies that underlies ciliary beating and the directional fluid flow across ciliated epithelia. This Xenopus tropicalis (Western clawed frog) protein is Segment polarity protein dishevelled homolog DVL-2.